Consider the following 233-residue polypeptide: Hydroxyacylglutathione hydrolase (233 aa).

The Zn(2+) site is built by histidine 52, histidine 54, aspartate 56, histidine 57, histidine 108, aspartate 125, and histidine 163.

Belongs to the metallo-beta-lactamase superfamily. Glyoxalase II family. As to quaternary structure, monomer. The cofactor is Zn(2+).

The enzyme catalyses an S-(2-hydroxyacyl)glutathione + H2O = a 2-hydroxy carboxylate + glutathione + H(+). It functions in the pathway secondary metabolite metabolism; methylglyoxal degradation; (R)-lactate from methylglyoxal: step 2/2. In terms of biological role, thiolesterase that catalyzes the hydrolysis of S-D-lactoyl-glutathione to form glutathione and D-lactic acid. The chain is Hydroxyacylglutathione hydrolase from Actinobacillus succinogenes (strain ATCC 55618 / DSM 22257 / CCUG 43843 / 130Z).